A 1218-amino-acid chain; its full sequence is Formin-A (1218 aa).

Residues 1 to 108 enclose the C2 domain; sequence MADKLYQIKL…ILGEACNYSV (108 aa). Residues 139 to 539 form the GBD/FH3 domain; the sequence is EEKKRHDEIQ…QISLRDKNIG (401 aa). Positions 563–638 form a coiled coil; it reads LKSQIESLKK…QLKLTQGTAK (76 aa). The tract at residues 634–762 is disordered; the sequence is QGTAKPDSAA…KAAAPPRKEV (129 aa). Positions 649 to 747 are enriched in pro residues; the sequence is APPPPPPPMT…FGKGPPPPPG (99 aa). The FH1 domain maps to 652 to 737; it reads PPPPPMTGGG…AGGPPPPPPP (86 aa). The FH2 domain occupies 759-1155; sequence RKEVPVPALK…IAKREAAKKL (397 aa). Residues 1034–1061 are a coiled coil; the sequence is SLSQVQAEVATLRKEFVQVQKSIETLNS. 2 disordered regions span residues 1153-1179 and 1198-1218; these read KKLK…TVEV and KNRR…PIDL. The 36-residue stretch at 1174-1209 folds into the DAD domain; the sequence is GETVEVKESVVDDLLDTIASGDAFKNRRRRARKTDQ.

The protein belongs to the formin homology family. Diaphanous subfamily. Interacts (via GBD/FH3 domain) with activated Rho-GTPases.

In terms of biological role, formins play an important role in the nucleation of actin and the formation of linear actin filaments. The protein is Formin-A (forA) of Dictyostelium discoideum (Social amoeba).